The sequence spans 303 residues: UDP-3-O-acyl-N-acetylglucosamine deacetylase (303 aa).

Zn(2+) is bound by residues H78, H237, and D241. The Proton donor role is filled by H264.

It belongs to the LpxC family. The cofactor is Zn(2+).

The enzyme catalyses a UDP-3-O-[(3R)-3-hydroxyacyl]-N-acetyl-alpha-D-glucosamine + H2O = a UDP-3-O-[(3R)-3-hydroxyacyl]-alpha-D-glucosamine + acetate. It participates in glycolipid biosynthesis; lipid IV(A) biosynthesis; lipid IV(A) from (3R)-3-hydroxytetradecanoyl-[acyl-carrier-protein] and UDP-N-acetyl-alpha-D-glucosamine: step 2/6. In terms of biological role, catalyzes the hydrolysis of UDP-3-O-myristoyl-N-acetylglucosamine to form UDP-3-O-myristoylglucosamine and acetate, the committed step in lipid A biosynthesis. This chain is UDP-3-O-acyl-N-acetylglucosamine deacetylase, found in Azotobacter vinelandii (strain DJ / ATCC BAA-1303).